The following is a 206-amino-acid chain: uncharacterized protein (206 aa).

An N-terminal signal peptide occupies residues 1-17 (MKGKILFALFLSAGVIA). Cys-18 is lipidated: N-palmitoyl cysteine. A lipid anchor (S-diacylglycerol cysteine) is attached at Cys-18. Residues 21 to 58 (ASQAAKQQEVKVAKAETKTKKKESKAEKFRKALAAQDK) adopt a coiled-coil conformation. The 105-residue stretch at 97-201 (GDWRKGESLA…DIVAYLHDPE (105 aa)) folds into the Cytochrome c domain. Heme c is bound by residues Cys-127, Cys-130, and His-131.

The protein resides in the cell membrane. This is an uncharacterized protein from Aquifex aeolicus (strain VF5).